Here is a 55-residue protein sequence, read N- to C-terminus: Trypsin inhibitor (55 aa).

Positions 1 to 55 constitute a Kazal-like domain; the sequence is AHMDCTEFNPLCRCNKMLGDLICAVIGDAKEEHRNMCALCCEHPGGFEYSNGPCE. Intrachain disulfides connect Cys5/Cys40, Cys12/Cys41, Cys14/Cys37, and Cys23/Cys54.

The protein localises to the secreted. In terms of biological role, potent inhibitor of trypsin. This is Trypsin inhibitor from Halocynthia roretzi (Sea squirt).